Reading from the N-terminus, the 209-residue chain is Orotate phosphoribosyltransferase (209 aa).

5-phospho-alpha-D-ribose 1-diphosphate is bound by residues Arg-96, Lys-100, His-102, and 122 to 130; that span reads EDLISTGGS. Ser-126 provides a ligand contact to orotate.

It belongs to the purine/pyrimidine phosphoribosyltransferase family. PyrE subfamily. In terms of assembly, homodimer. The cofactor is Mg(2+).

It carries out the reaction orotidine 5'-phosphate + diphosphate = orotate + 5-phospho-alpha-D-ribose 1-diphosphate. It participates in pyrimidine metabolism; UMP biosynthesis via de novo pathway; UMP from orotate: step 1/2. Its function is as follows. Catalyzes the transfer of a ribosyl phosphate group from 5-phosphoribose 1-diphosphate to orotate, leading to the formation of orotidine monophosphate (OMP). In Streptococcus mutans serotype c (strain ATCC 700610 / UA159), this protein is Orotate phosphoribosyltransferase.